A 156-amino-acid chain; its full sequence is Ribosomal RNA large subunit methyltransferase H (156 aa).

Residues Leu73, Gly104, and 123–128 (LSDLTL) each bind S-adenosyl-L-methionine.

This sequence belongs to the RNA methyltransferase RlmH family. As to quaternary structure, homodimer.

It localises to the cytoplasm. It catalyses the reaction pseudouridine(1915) in 23S rRNA + S-adenosyl-L-methionine = N(3)-methylpseudouridine(1915) in 23S rRNA + S-adenosyl-L-homocysteine + H(+). Functionally, specifically methylates the pseudouridine at position 1915 (m3Psi1915) in 23S rRNA. In Leptothrix cholodnii (strain ATCC 51168 / LMG 8142 / SP-6) (Leptothrix discophora (strain SP-6)), this protein is Ribosomal RNA large subunit methyltransferase H.